Reading from the N-terminus, the 116-residue chain is Large ribosomal subunit protein bL19 (116 aa).

Belongs to the bacterial ribosomal protein bL19 family.

This protein is located at the 30S-50S ribosomal subunit interface and may play a role in the structure and function of the aminoacyl-tRNA binding site. This chain is Large ribosomal subunit protein bL19, found in Pseudomonas fluorescens (strain Pf0-1).